The sequence spans 451 residues: Phosphoglucosamine mutase (451 aa).

Ser103 acts as the Phosphoserine intermediate in catalysis. Mg(2+)-binding residues include Ser103, Asp243, Asp245, and Asp247. Ser103 bears the Phosphoserine mark.

The protein belongs to the phosphohexose mutase family. Requires Mg(2+) as cofactor. Post-translationally, activated by phosphorylation.

The enzyme catalyses alpha-D-glucosamine 1-phosphate = D-glucosamine 6-phosphate. Functionally, catalyzes the conversion of glucosamine-6-phosphate to glucosamine-1-phosphate. The chain is Phosphoglucosamine mutase from Levilactobacillus brevis (strain ATCC 367 / BCRC 12310 / CIP 105137 / JCM 1170 / LMG 11437 / NCIMB 947 / NCTC 947) (Lactobacillus brevis).